Reading from the N-terminus, the 671-residue chain is Bifunctional acetylxylan esterase/xylanase XynS20E (671 aa).

The first 19 residues, Met1 to Ala19, serve as a signal peptide directing secretion. The segment at Gln54–Gln279 is acetylxylan esterase. The active-site Charge relay system is the Ser152. An N-linked (GlcNAc...) asparagine glycan is attached at Asn238. Positions Pro285–Gly328 are disordered. Over residues Gly304–Asn314 the composition is skewed to gly residues. 2 consecutive CBM10 domains span residues Lys335–Gly374 and Thr383–Gly422. Residue Asn339 is glycosylated (N-linked (GlcNAc...) asparagine). N-linked (GlcNAc...) asparagine glycans are attached at residues Asn445 and Asn483. The 201-residue stretch at Thr461 to Asp661 folds into the GH11 domain. Glu555 acts as the Nucleophile in catalysis. Residue Glu648 is the Proton donor of the active site.

This sequence in the N-terminal section; belongs to the axeA family. The protein in the C-terminal section; belongs to the glycosyl hydrolase 11 (cellulase G) family.

The protein resides in the secreted. The catalysed reaction is Deacetylation of xylans and xylo-oligosaccharides.. It carries out the reaction Endohydrolysis of (1-&gt;4)-beta-D-xylosidic linkages in xylans.. Its pathway is glycan degradation; xylan degradation. Its function is as follows. Bifunctional acetylxylan esterase/xylanase involved in the hydrolysis of xylan, a major structural heterogeneous polysaccharide found in plant biomass representing the second most abundant polysaccharide in the biosphere, after cellulose. Degrades xylan from acetylxylan, beechwood, birchwood, and oat spelt, and releases acetate from 4-methylumbelliferyl acetate and beta-D-xylose tetraacetate. No activity is observed against carboxy methyl cellulose, beta-glucan, p-nitrophenol acetate, p-nitrophenol laurate, p-nitrophenol myristate, p-nitrophenol, palmitate, or beta-naphthol acetate. The sequence is that of Bifunctional acetylxylan esterase/xylanase XynS20E (xynS20E) from Neocallimastix patriciarum (Rumen fungus).